The chain runs to 388 residues: Splicing factor 3B subunit 4 (388 aa).

RRM domains lie at Ala13–Ala91 and Ala100–Lys179. Positions Gln244 to Ser388 are disordered. Pro residues-rich tracts occupy residues Pro261 to Phe325, Met333 to Tyr355, and Met362 to Ser388.

It belongs to the SF3B4 family.

It localises to the nucleus. In terms of biological role, subunit of the splicing factor SF3B required for 'A' complex assembly formed by the stable binding of U2 snRNP to the branchpoint sequence (BPS) in pre-mRNA. Sequence independent binding of SF3A/SF3B complex upstream of the branch site is essential, it may anchor U2 snRNP to the pre-mRNA. May also be involved in the assembly of the 'E' complex. SF3B4 has been found in complex 'B' and 'C' as well. Belongs also to the minor U12-dependent spliceosome, which is involved in the splicing of rare class of nuclear pre-mRNA intron. This is Splicing factor 3B subunit 4 (sap-49) from Caenorhabditis elegans.